Consider the following 340-residue polypeptide: Ferrochelatase (340 aa).

Residues His-202 and Glu-283 each contribute to the Fe cation site.

This sequence belongs to the ferrochelatase family.

Its subcellular location is the cytoplasm. The catalysed reaction is heme b + 2 H(+) = protoporphyrin IX + Fe(2+). The protein operates within porphyrin-containing compound metabolism; protoheme biosynthesis; protoheme from protoporphyrin-IX: step 1/1. Its function is as follows. Catalyzes the ferrous insertion into protoporphyrin IX. This Acinetobacter baylyi (strain ATCC 33305 / BD413 / ADP1) protein is Ferrochelatase.